Consider the following 145-residue polypeptide: Transcription antitermination protein NusB (145 aa).

It belongs to the NusB family.

Involved in transcription antitermination. Required for transcription of ribosomal RNA (rRNA) genes. Binds specifically to the boxA antiterminator sequence of the ribosomal RNA (rrn) operons. This is Transcription antitermination protein NusB from Geobacter sp. (strain M21).